The chain runs to 652 residues: Threonine--tRNA ligase (652 aa).

Residues 1 to 64 enclose the TGS domain; the sequence is MPDVIRITFP…HEDGELVIIT (64 aa). The catalytic stretch occupies residues 245–542; it reads DHRKLGKELE…LIEEYKGAFP (298 aa). Residues Cys338, His389, and His519 each contribute to the Zn(2+) site.

This sequence belongs to the class-II aminoacyl-tRNA synthetase family. Homodimer. Zn(2+) is required as a cofactor.

It localises to the cytoplasm. It carries out the reaction tRNA(Thr) + L-threonine + ATP = L-threonyl-tRNA(Thr) + AMP + diphosphate + H(+). Functionally, catalyzes the attachment of threonine to tRNA(Thr) in a two-step reaction: L-threonine is first activated by ATP to form Thr-AMP and then transferred to the acceptor end of tRNA(Thr). Also edits incorrectly charged L-seryl-tRNA(Thr). The sequence is that of Threonine--tRNA ligase from Geobacillus kaustophilus (strain HTA426).